Reading from the N-terminus, the 135-residue chain is ATP synthase epsilon chain (135 aa).

This sequence belongs to the ATPase epsilon chain family. F-type ATPases have 2 components, CF(1) - the catalytic core - and CF(0) - the membrane proton channel. CF(1) has five subunits: alpha(3), beta(3), gamma(1), delta(1), epsilon(1). CF(0) has three main subunits: a, b and c.

The protein resides in the cell inner membrane. Its function is as follows. Produces ATP from ADP in the presence of a proton gradient across the membrane. The sequence is that of ATP synthase epsilon chain from Rhizobium leguminosarum bv. trifolii (strain WSM2304).